We begin with the raw amino-acid sequence, 379 residues long: MSSIQGKGTAGPSPEGIPNSREDGEMNPEGVTISGQTVSFTSVSKSASADDIQQVALPIIQSDSLASSPILGGAIGEIEVADMVAEVVENNEANVQQLDEDLEAIFQAIDAGEEQLESLEVKNKSSLKGVRYSSGRHGMDRNKSSSLSPERTRLANIRTSLRSTASRMRHHAGLVSSSLADLQKQLRSISQEDLKAALGKDSEAVLSRLRKLGLDVNKKGEWRLRTNGDIGRLNQSIHDLSLLVENVNDEGILSLNKEASEEEVNACCSSGSKACQFLQEHLMSALRAIYQQILRFLNWISRKIGVGSKRTDDYYTRPGVFTNPYASYLGANPPINDPRSLRERLRGGGALSGEDTLFSMPQDDSVDSESVSDDDRGSR.

Disordered regions lie at residues 1 to 37 (MSSIQGKGTAGPSPEGIPNSREDGEMNPEGVTISGQT), 130 to 150 (VRYSSGRHGMDRNKSSSLSPE), and 332 to 379 (NPPI…RGSR).

It belongs to the chlamydial CPn_0499/CT_392/TC_0671 family.

This is an uncharacterized protein from Chlamydia muridarum (strain MoPn / Nigg).